An 855-amino-acid polypeptide reads, in one-letter code: DNA replication helicase (855 aa).

78–85 (GNAGSGKS) provides a ligand contact to ATP.

This sequence belongs to the herpesviridae helicase family. As to quaternary structure, associates with the primase and the primase-associated factor to form the helicase-primase complex.

It localises to the host nucleus. Functionally, component of the helicase/primase complex. Unwinds the DNA at the replication forks and generates single-stranded DNA for both leading and lagging strand synthesis. The primase synthesizes short RNA primers on the lagging strand that the polymerase elongates using dNTPs. Possesses helicase-like motifs and therefore may act as the helicase subunit of the complex. In Amazona oratrix (yellow-headed parrot), this protein is DNA replication helicase.